We begin with the raw amino-acid sequence, 542 residues long: CTP synthase (542 aa).

An amidoligase domain region spans residues 1–265; that stretch reads MARYVFITGG…DSEVLAAFGI (265 aa). Residue serine 13 coordinates CTP. Residue serine 13 coordinates UTP. 14–19 contributes to the ATP binding site; sequence SLGKGI. Tyrosine 54 serves as a coordination point for L-glutamine. ATP is bound at residue aspartate 71. Positions 71 and 139 each coordinate Mg(2+). Residues 146 to 148, 186 to 191, and lysine 222 each bind CTP; these read DIE and KTKPTQ. Residues 186 to 191 and lysine 222 each bind UTP; that span reads KTKPTQ. The Glutamine amidotransferase type-1 domain occupies 291-541; the sequence is TIAIVGKYTG…IAAAVEQSRL (251 aa). An L-glutamine-binding site is contributed by glycine 353. Cysteine 380 serves as the catalytic Nucleophile; for glutamine hydrolysis. L-glutamine contacts are provided by residues 381 to 384, glutamate 404, and arginine 469; that span reads FGMQ. Active-site residues include histidine 514 and glutamate 516.

This sequence belongs to the CTP synthase family. In terms of assembly, homotetramer.

It carries out the reaction UTP + L-glutamine + ATP + H2O = CTP + L-glutamate + ADP + phosphate + 2 H(+). It catalyses the reaction L-glutamine + H2O = L-glutamate + NH4(+). The enzyme catalyses UTP + NH4(+) + ATP = CTP + ADP + phosphate + 2 H(+). It participates in pyrimidine metabolism; CTP biosynthesis via de novo pathway; CTP from UDP: step 2/2. Allosterically activated by GTP, when glutamine is the substrate; GTP has no effect on the reaction when ammonia is the substrate. The allosteric effector GTP functions by stabilizing the protein conformation that binds the tetrahedral intermediate(s) formed during glutamine hydrolysis. Inhibited by the product CTP, via allosteric rather than competitive inhibition. Functionally, catalyzes the ATP-dependent amination of UTP to CTP with either L-glutamine or ammonia as the source of nitrogen. Regulates intracellular CTP levels through interactions with the four ribonucleotide triphosphates. The chain is CTP synthase from Chelativorans sp. (strain BNC1).